The chain runs to 525 residues: GMP synthase [glutamine-hydrolyzing] (525 aa).

Residues 9-207 (RILILDFGSQ…VRDICQCEAL (199 aa)) form the Glutamine amidotransferase type-1 domain. The Nucleophile role is filled by C86. Active-site residues include H181 and E183. One can recognise a GMPS ATP-PPase domain in the interval 208 to 400 (WTPAKIIDDA…LGLPYDMLYR (193 aa)). 235–241 (SGGVDSS) is a binding site for ATP.

Homodimer.

It carries out the reaction XMP + L-glutamine + ATP + H2O = GMP + L-glutamate + AMP + diphosphate + 2 H(+). The protein operates within purine metabolism; GMP biosynthesis; GMP from XMP (L-Gln route): step 1/1. In terms of biological role, catalyzes the synthesis of GMP from XMP. In Citrobacter koseri (strain ATCC BAA-895 / CDC 4225-83 / SGSC4696), this protein is GMP synthase [glutamine-hydrolyzing].